Here is a 457-residue protein sequence, read N- to C-terminus: Siroheme synthase (457 aa).

Residues 1-204 (MDHLPIFCQL…ADEKAVNATT (204 aa)) form a precorrin-2 dehydrogenase /sirohydrochlorin ferrochelatase region. NAD(+) is bound by residues 22 to 23 (DV) and 43 to 44 (LT). Position 128 is a phosphoserine (serine 128). The uroporphyrinogen-III C-methyltransferase stretch occupies residues 216–457 (GEVVLVGAGP…RDKLNWFSNY (242 aa)). Position 225 (proline 225) interacts with S-adenosyl-L-methionine. Aspartate 248 (proton acceptor) is an active-site residue. Lysine 270 functions as the Proton donor in the catalytic mechanism. S-adenosyl-L-methionine contacts are provided by residues 301 to 303 (GGD), isoleucine 306, 331 to 332 (TA), methionine 382, and glycine 411.

In the N-terminal section; belongs to the precorrin-2 dehydrogenase / sirohydrochlorin ferrochelatase family. This sequence in the C-terminal section; belongs to the precorrin methyltransferase family.

The catalysed reaction is uroporphyrinogen III + 2 S-adenosyl-L-methionine = precorrin-2 + 2 S-adenosyl-L-homocysteine + H(+). The enzyme catalyses precorrin-2 + NAD(+) = sirohydrochlorin + NADH + 2 H(+). It catalyses the reaction siroheme + 2 H(+) = sirohydrochlorin + Fe(2+). It functions in the pathway cofactor biosynthesis; adenosylcobalamin biosynthesis; precorrin-2 from uroporphyrinogen III: step 1/1. It participates in cofactor biosynthesis; adenosylcobalamin biosynthesis; sirohydrochlorin from precorrin-2: step 1/1. The protein operates within porphyrin-containing compound metabolism; siroheme biosynthesis; precorrin-2 from uroporphyrinogen III: step 1/1. Its pathway is porphyrin-containing compound metabolism; siroheme biosynthesis; siroheme from sirohydrochlorin: step 1/1. It functions in the pathway porphyrin-containing compound metabolism; siroheme biosynthesis; sirohydrochlorin from precorrin-2: step 1/1. In terms of biological role, multifunctional enzyme that catalyzes the SAM-dependent methylations of uroporphyrinogen III at position C-2 and C-7 to form precorrin-2 via precorrin-1. Then it catalyzes the NAD-dependent ring dehydrogenation of precorrin-2 to yield sirohydrochlorin. Finally, it catalyzes the ferrochelation of sirohydrochlorin to yield siroheme. This Salmonella heidelberg (strain SL476) protein is Siroheme synthase.